A 687-amino-acid polypeptide reads, in one-letter code: Probable ATP-dependent RNA helicase Dbp73D (687 aa).

Disordered stretches follow at residues 1–26 (MELFTVNRYTEDLKEQKDGAQGTNNE) and 52–87 (TPILEKETSDVKESESKEEQVEEPEKPLEVVQEEDV). 2 stretches are compositionally biased toward basic and acidic residues: residues 9–18 (YTEDLKEQKD) and 54–79 (ILEKETSDVKESESKEEQVEEPEKPL). The Q motif motif lies at 160–168 (LFPVQKQVI). A Helicase ATP-binding domain is found at 177–381 (KPPPFRPRDI…DLRLFQPRLF (205 aa)). 190–197 (APTGSGKT) serves as a coordination point for ATP. The short motif at 305–308 (DEAD) is the DEAD box element. Positions 434-583 (TVFALVEKYK…EIHVSPDIEI (150 aa)) constitute a Helicase C-terminal domain. The tract at residues 646–675 (IVQSSKKSSETKNSKTKADKTKYQPKETKK) is disordered. The segment covering 652 to 675 (KSSETKNSKTKADKTKYQPKETKK) has biased composition (basic and acidic residues).

The protein belongs to the DEAD box helicase family. DDX51/DBP6 subfamily. Expressed in the germline tissue of the ovary.

The protein localises to the nucleus. Its subcellular location is the nucleolus. The enzyme catalyses ATP + H2O = ADP + phosphate + H(+). Functionally, ATP-binding RNA helicase involved in the biogenesis of 60S ribosomal subunits. The sequence is that of Probable ATP-dependent RNA helicase Dbp73D (Dbp73D) from Drosophila melanogaster (Fruit fly).